We begin with the raw amino-acid sequence, 97 residues long: DNA/RNA-binding protein Alba 1 (97 aa).

Ser-2 carries the post-translational modification N-acetylserine; by ard1 acetylase. RNA-binding residues include Lys-16, Lys-17, and Tyr-22. N6,N6,N6-trimethyllysine; alternate is present on Lys-16. An N6,N6-dimethyllysine; alternate modification is found at Lys-16. Lys-16 is modified (N6-acetyllysine; alternate). Lys-16 carries the N6-methyllysine; alternate modification. Deamidated asparagine; partial is present on Asn-31. Gln-32 carries the post-translational modification Deamidated glutamine; partial. Residue Lys-40 is modified to N6-methyllysine; partial. RNA contacts are provided by Arg-42 and Arg-44. N6-acetyllysine; partial is present on Lys-48. Asp-51 bears the Aspartate methyl ester; partial mark. At Asn-58 the chain carries Deamidated asparagine; partial. Lys-64 bears the N6-acetyllysine; alternate; partial mark. Lys-64 is subject to N6-methyllysine; alternate; partial. At Lys-68 the chain carries N6-acetyllysine; partial. Gln-75 is modified (N5-methylglutamine; partial). An Aspartate methyl ester; partial modification is found at Asp-81. Residue Lys-97 is modified to N6-methyllysine; partial.

This sequence belongs to the histone-like Alba family. As to quaternary structure, forms homodimers and higher order oligomers, e.g. homotetramers. Post-translationally, acetylated. Acetylation at Lys-16 by the Pat acetylase decreases DNA-binding affinity. Deacetylation at Lys-16 by the CobB deacetylase increases DNA-binding affinity. Acetylation at Ser-2 is involved in the regulation of the turnover of the protein.

It localises to the cytoplasm. The protein localises to the chromosome. In terms of biological role, binds double-stranded DNA tightly but without sequence specificity. Involved in DNA compaction. Possesses DNA endonuclease activity. Prevents transcription after DNA binding. Binds single-stranded DNA and RNA in vitro. Binds rRNA and mRNA in vivo. May play a role in maintaining the structural and functional stability of RNA, and, perhaps, ribosomes. Binds double-stranded RNA (dsRNA) and exhibits RNA chaperone activity. Required for normal growth. This is DNA/RNA-binding protein Alba 1 from Saccharolobus islandicus (strain REY15A) (Sulfolobus islandicus).